The sequence spans 588 residues: DNA mismatch repair protein MutL (588 aa).

It belongs to the DNA mismatch repair MutL/HexB family.

In terms of biological role, this protein is involved in the repair of mismatches in DNA. It is required for dam-dependent methyl-directed DNA mismatch repair. May act as a 'molecular matchmaker', a protein that promotes the formation of a stable complex between two or more DNA-binding proteins in an ATP-dependent manner without itself being part of a final effector complex. The protein is DNA mismatch repair protein MutL of Methanocorpusculum labreanum (strain ATCC 43576 / DSM 4855 / Z).